We begin with the raw amino-acid sequence, 381 residues long: Acetylornithine deacetylase (381 aa).

His-79 contributes to the Zn(2+) binding site. The active site involves Asp-81. Asp-111 is a Zn(2+) binding site. Glu-143 is an active-site residue. Residues Glu-144, Glu-168, and His-354 each coordinate Zn(2+).

The protein belongs to the peptidase M20A family. ArgE subfamily. Homodimer. Zn(2+) serves as cofactor. Co(2+) is required as a cofactor. The cofactor is glutathione.

It localises to the cytoplasm. It carries out the reaction N(2)-acetyl-L-ornithine + H2O = L-ornithine + acetate. The protein operates within amino-acid biosynthesis; L-arginine biosynthesis; L-ornithine from N(2)-acetyl-L-ornithine (linear): step 1/1. In terms of biological role, catalyzes the hydrolysis of the amide bond of N(2)-acetylated L-amino acids. Cleaves the acetyl group from N-acetyl-L-ornithine to form L-ornithine, an intermediate in L-arginine biosynthesis pathway, and a branchpoint in the synthesis of polyamines. This is Acetylornithine deacetylase from Buchnera aphidicola subsp. Acyrthosiphon pisum (strain 5A).